We begin with the raw amino-acid sequence, 349 residues long: MNGTEGNNFYIPMSNRTGLVRSPYEYTQYYLADPWQFKALAFYMFFLICFGLPINVLTLLVTAQHKKLRQPLNYILVNLAFAGTIMAFFGFTVTFYCSINGYMALGPTGCAIEGFFATLGGQVALWSLVVLAIERYIVVCKPMGSFKFSSNHAMAGIAFTWVMASSCAVPPLFGWSRYIPEGMQTSCGPDYYTLNPEFNNESYVLYMFSCHFCVPVTTIFFTYGSLVCTVKAAAAQQQESESTQKAEREVTRMVILMVLGFLVAWVPYASFAAWIFFNRGAAFSAQAMAIPAFFSKASALFNPIIYVLLNKQFRSCMLNTLFCGKSPLGDDESSSVSTSKTEVSSVSPA.

Residues 1-36 (MNGTEGNNFYIPMSNRTGLVRSPYEYTQYYLADPWQ) lie on the Extracellular side of the membrane. Residues Asn2 and Asn15 are each glycosylated (N-linked (GlcNAc...) asparagine). The chain crosses the membrane as a helical span at residues 37–61 (FKALAFYMFFLICFGLPINVLTLLV). The Cytoplasmic portion of the chain corresponds to 62-73 (TAQHKKLRQPLN). Residues 74–99 (YILVNLAFAGTIMAFFGFTVTFYCSI) form a helical membrane-spanning segment. Topologically, residues 100-113 (NGYMALGPTGCAIE) are extracellular. A disulfide bridge links Cys110 with Cys187. A helical membrane pass occupies residues 114–133 (GFFATLGGQVALWSLVVLAI). The Cytoplasmic segment spans residues 134–152 (ERYIVVCKPMGSFKFSSNH). A helical transmembrane segment spans residues 153-176 (AMAGIAFTWVMASSCAVPPLFGWS). At 177–202 (RYIPEGMQTSCGPDYYTLNPEFNNES) the chain is on the extracellular side. N-linked (GlcNAc...) asparagine glycosylation is present at Asn200. A helical transmembrane segment spans residues 203–230 (YVLYMFSCHFCVPVTTIFFTYGSLVCTV). Residues 231 to 252 (KAAAAQQQESESTQKAEREVTR) are Cytoplasmic-facing. A helical membrane pass occupies residues 253–276 (MVILMVLGFLVAWVPYASFAAWIF). Residues 277–284 (FNRGAAFS) are Extracellular-facing. A helical transmembrane segment spans residues 285–309 (AQAMAIPAFFSKASALFNPIIYVLL). At Lys296 the chain carries N6-(retinylidene)lysine. The Cytoplasmic segment spans residues 310 to 349 (NKQFRSCMLNTLFCGKSPLGDDESSSVSTSKTEVSSVSPA). The segment at 328-349 (LGDDESSSVSTSKTEVSSVSPA) is disordered. Residues 334–349 (SSVSTSKTEVSSVSPA) are compositionally biased toward low complexity.

It belongs to the G-protein coupled receptor 1 family. Opsin subfamily. Post-translationally, phosphorylated on some or all of the serine and threonine residues present in the C-terminal region.

The protein localises to the membrane. Its function is as follows. Visual pigments are the light-absorbing molecules that mediate vision. They consist of an apoprotein, opsin, covalently linked to cis-retinal. This chain is Green-sensitive opsin-2 (opn1mw2), found in Danio rerio (Zebrafish).